Consider the following 667-residue polypeptide: Ribosomal oxygenase 1 (667 aa).

Residue methionine 1 is modified to N-acetylmethionine. A compositionally biased stretch (low complexity) spans 1 to 11; the sequence is MDGLRASAGLL. Residues 1 to 99 form a disordered region; the sequence is MDGLRASAGL…ATGREPHGQL (99 aa). 2 stretches are compositionally biased toward basic residues: residues 12–22 and 35–44; these read RRGRLRRRRQQ and RPRKIRRQLR. Serine 61, serine 64, and serine 108 each carry phosphoserine. One can recognise a JmjC domain in the interval 322 to 467; the sequence is CSLRLLCPQA…DFLEAVLPLA (146 aa). Residues histidine 368, aspartate 370, and histidine 433 each contribute to the Fe cation site.

The protein belongs to the ROX family. NO66 subfamily. As to quaternary structure, interacts with SP7/OSX; the interaction is direct. Interacts with MYC. Interacts with PHF19; leading to its recruitment to H3K36me3 sites. Fe(2+) serves as cofactor.

The protein resides in the nucleus. The protein localises to the nucleolus. Its subcellular location is the nucleoplasm. The catalysed reaction is N(6),N(6)-dimethyl-L-lysyl(36)-[histone H3] + 2 2-oxoglutarate + 2 O2 = L-lysyl(36)-[histone H3] + 2 formaldehyde + 2 succinate + 2 CO2. The enzyme catalyses N(6)-methyl-L-lysyl-[protein] + 2-oxoglutarate + O2 = L-lysyl-[protein] + formaldehyde + succinate + CO2. It carries out the reaction L-histidyl-[protein] + 2-oxoglutarate + O2 = (3S)-3-hydroxy-L-histidyl-[protein] + succinate + CO2. In terms of biological role, oxygenase that can act as both a histone lysine demethylase and a ribosomal histidine hydroxylase. Specifically demethylates 'Lys-4' (H3K4me) and 'Lys-36' (H3K36me) of histone H3, thereby playing a central role in histone code. Preferentially demethylates trimethylated H3 'Lys-4' (H3K4me3) and monomethylated H3 'Lys-4' (H3K4me1) residues, while it has weaker activity for dimethylated H3 'Lys-36' (H3K36me2). Acts as a regulator of osteoblast differentiation via its interaction with SP7/OSX by demethylating H3K4me and H3K36me, thereby inhibiting SP7/OSX-mediated promoter activation. Also catalyzes demethylation of non-histone proteins, such as CGAS: demethylation of monomethylated CGAS promotes interaction between CGAS and PARP1, followed by PARP1 inactivation. Also catalyzes the hydroxylation of 60S ribosomal protein L8 on 'His-216', thereby playing a role in ribosome biogenesis. Participates in MYC-induced transcriptional activation. In Bos taurus (Bovine), this protein is Ribosomal oxygenase 1 (RIOX1).